The primary structure comprises 163 residues: Adenosine 5'-monophosphoramidase HINT2 (163 aa).

The N-terminal 17 residues, 1–17 (MAAAVVLAAGLRAARRA), are a transit peptide targeting the mitochondrion. The 109-residue stretch at 55-163 (IFSRILDKSL…GGRQLQWPPG (109 aa)) folds into the HIT domain. The AMP site is built by S63 and D80. K119 is subject to N6-acetyllysine. N136 contributes to the AMP binding site. K139 carries the post-translational modification N6-acetyllysine. Residues 142-145 (AQSV) and 149-151 (HIH) contribute to the AMP site. The short motif at 147-151 (HLHIH) is the Histidine triad motif element. The active-site Tele-AMP-histidine intermediate is H149.

This sequence belongs to the HINT family. High expression in liver and pancreas. Expression is significantly down-regulated in hepatocellular carcinoma (HCC) patients.

Its subcellular location is the mitochondrion. The enzyme catalyses adenosine 5'-phosphoramidate + H2O = AMP + NH4(+). In terms of biological role, exhibits adenosine 5'-monophosphoramidase activity, hydrolyzing purine nucleotide phosphoramidates with a single phosphate group such as adenosine 5'monophosphoramidate (AMP-NH2) to yield AMP and NH2. Hydrolyzes adenosine 5'-O-p-nitrophenylphosphoramidate (AMP-pNA). Hydrolyzes fluorogenic purine nucleoside tryptamine phosphoramidates in vitro. May be involved in steroid biosynthesis. May play a role in apoptosis. The sequence is that of Adenosine 5'-monophosphoramidase HINT2 from Homo sapiens (Human).